Reading from the N-terminus, the 336-residue chain is uncharacterized protein (336 aa).

Positions 1 to 21 are cleaved as a signal peptide; the sequence is MSELVLITGITGFVASHSAEA. NADP(+) is bound at residue lysine 38. Phosphothreonine is present on threonine 153. Tyrosine 167 lines the NADP(+) pocket.

It belongs to the NAD(P)-dependent epimerase/dehydratase family. Dihydroflavonol-4-reductase subfamily.

This is an uncharacterized protein from Schizosaccharomyces pombe (strain 972 / ATCC 24843) (Fission yeast).